A 361-amino-acid chain; its full sequence is Fructose-1,6-bisphosphatase class 1 2 (361 aa).

Glu110, Asp134, Leu136, and Asp137 together coordinate Mg(2+). Residues 137 to 140, Asn231, Tyr264, and Lys294 each bind substrate; that span reads DGSS. Glu300 lines the Mg(2+) pocket.

The protein belongs to the FBPase class 1 family. In terms of assembly, homotetramer. The cofactor is Mg(2+).

It localises to the cytoplasm. It carries out the reaction beta-D-fructose 1,6-bisphosphate + H2O = beta-D-fructose 6-phosphate + phosphate. The protein operates within carbohydrate biosynthesis; gluconeogenesis. This is Fructose-1,6-bisphosphatase class 1 2 from Salinibacter ruber (strain DSM 13855 / M31).